The chain runs to 84 residues: Small ribosomal subunit protein bS18 (84 aa).

Belongs to the bacterial ribosomal protein bS18 family. As to quaternary structure, part of the 30S ribosomal subunit. Forms a tight heterodimer with protein bS6.

In terms of biological role, binds as a heterodimer with protein bS6 to the central domain of the 16S rRNA, where it helps stabilize the platform of the 30S subunit. This is Small ribosomal subunit protein bS18 from Methylorubrum extorquens (strain CM4 / NCIMB 13688) (Methylobacterium extorquens).